The chain runs to 424 residues: 3-oxo-tetronate kinase (424 aa).

ATP contacts are provided by residues S260, 364–367, and G407; that span reads GGET.

This sequence belongs to the four-carbon acid sugar kinase family.

It carries out the reaction 3-dehydro-L-erythronate + ATP = 3-dehydro-4-O-phospho-L-erythronate + ADP + H(+). It catalyses the reaction 3-dehydro-D-erythronate + ATP = 3-dehydro-4-O-phospho-D-erythronate + ADP + H(+). Catalyzes the ATP-dependent phosphorylation of 3-oxo-tetronate to 3-oxo-tetronate 4-phosphate. This is 3-oxo-tetronate kinase from Pectobacterium atrosepticum (strain SCRI 1043 / ATCC BAA-672) (Erwinia carotovora subsp. atroseptica).